A 425-amino-acid chain; its full sequence is Serine--tRNA ligase (425 aa).

L-serine is bound at residue 232–234; it reads TSE. ATP is bound by residues 263–265 and valine 279; that span reads RRE. Residue glutamate 286 coordinates L-serine. Residue 350-353 participates in ATP binding; it reads EVVS. Threonine 387 contacts L-serine.

This sequence belongs to the class-II aminoacyl-tRNA synthetase family. Type-1 seryl-tRNA synthetase subfamily. In terms of assembly, homodimer. The tRNA molecule binds across the dimer.

It is found in the cytoplasm. The catalysed reaction is tRNA(Ser) + L-serine + ATP = L-seryl-tRNA(Ser) + AMP + diphosphate + H(+). It carries out the reaction tRNA(Sec) + L-serine + ATP = L-seryl-tRNA(Sec) + AMP + diphosphate + H(+). It participates in aminoacyl-tRNA biosynthesis; selenocysteinyl-tRNA(Sec) biosynthesis; L-seryl-tRNA(Sec) from L-serine and tRNA(Sec): step 1/1. Functionally, catalyzes the attachment of serine to tRNA(Ser). Is also able to aminoacylate tRNA(Sec) with serine, to form the misacylated tRNA L-seryl-tRNA(Sec), which will be further converted into selenocysteinyl-tRNA(Sec). The protein is Serine--tRNA ligase of Methanospirillum hungatei JF-1 (strain ATCC 27890 / DSM 864 / NBRC 100397 / JF-1).